Here is a 230-residue protein sequence, read N- to C-terminus: Increased recombination centers protein 19 (230 aa).

The protein belongs to the IRC19 family.

Its function is as follows. Involved in sporulation and maintenance of the mitochondrial DNA. Is probably involved in a pathway contributing to genomic integrity. The polypeptide is Increased recombination centers protein 19 (IRC19) (Saccharomyces cerevisiae (strain ATCC 204508 / S288c) (Baker's yeast)).